The sequence spans 513 residues: ATP synthase subunit alpha (513 aa).

169 to 176 (GDRQTGKT) serves as a coordination point for ATP.

This sequence belongs to the ATPase alpha/beta chains family. As to quaternary structure, F-type ATPases have 2 components, CF(1) - the catalytic core - and CF(0) - the membrane proton channel. CF(1) has five subunits: alpha(3), beta(3), gamma(1), delta(1), epsilon(1). CF(0) has three main subunits: a(1), b(2) and c(9-12). The alpha and beta chains form an alternating ring which encloses part of the gamma chain. CF(1) is attached to CF(0) by a central stalk formed by the gamma and epsilon chains, while a peripheral stalk is formed by the delta and b chains.

It localises to the cell inner membrane. It catalyses the reaction ATP + H2O + 4 H(+)(in) = ADP + phosphate + 5 H(+)(out). Its function is as follows. Produces ATP from ADP in the presence of a proton gradient across the membrane. The alpha chain is a regulatory subunit. The protein is ATP synthase subunit alpha of Aliivibrio fischeri (strain ATCC 700601 / ES114) (Vibrio fischeri).